We begin with the raw amino-acid sequence, 119 residues long: Urease subunit beta (119 aa).

It belongs to the urease beta subunit family. Heterotrimer of UreA (gamma), UreB (beta) and UreC (alpha) subunits. Three heterotrimers associate to form the active enzyme.

It localises to the cytoplasm. The enzyme catalyses urea + 2 H2O + H(+) = hydrogencarbonate + 2 NH4(+). The protein operates within nitrogen metabolism; urea degradation; CO(2) and NH(3) from urea (urease route): step 1/1. The sequence is that of Urease subunit beta from Tolumonas auensis (strain DSM 9187 / NBRC 110442 / TA 4).